The sequence spans 239 residues: Peptidyl-tRNA hydrolase (239 aa).

Y14 lines the tRNA pocket. The active-site Proton acceptor is H19. Residues F64, N66, and N112 each coordinate tRNA. The tract at residues 188–225 is disordered; that stretch reads GGKPDAEEPQAPKKQVGQSHIHKARNAAQPKKLPATGP.

This sequence belongs to the PTH family. As to quaternary structure, monomer.

It localises to the cytoplasm. The catalysed reaction is an N-acyl-L-alpha-aminoacyl-tRNA + H2O = an N-acyl-L-amino acid + a tRNA + H(+). Functionally, hydrolyzes ribosome-free peptidyl-tRNAs (with 1 or more amino acids incorporated), which drop off the ribosome during protein synthesis, or as a result of ribosome stalling. In terms of biological role, catalyzes the release of premature peptidyl moieties from peptidyl-tRNA molecules trapped in stalled 50S ribosomal subunits, and thus maintains levels of free tRNAs and 50S ribosomes. The polypeptide is Peptidyl-tRNA hydrolase (Sinorhizobium fredii (strain NBRC 101917 / NGR234)).